The chain runs to 321 residues: Anthranilate phosphoribosyltransferase (321 aa).

Residues glycine 72, 75 to 76 (GD), threonine 80, 82 to 85 (NVST), 99 to 107 (KHGNVSITS), and serine 111 each bind 5-phospho-alpha-D-ribose 1-diphosphate. Glycine 72 serves as a coordination point for anthranilate. Position 84 (serine 84) interacts with Mg(2+). Asparagine 102 contacts anthranilate. Arginine 157 contributes to the anthranilate binding site. The Mg(2+) site is built by aspartate 216 and glutamate 217.

The protein belongs to the anthranilate phosphoribosyltransferase family. In terms of assembly, homodimer. It depends on Mg(2+) as a cofactor.

It carries out the reaction N-(5-phospho-beta-D-ribosyl)anthranilate + diphosphate = 5-phospho-alpha-D-ribose 1-diphosphate + anthranilate. The protein operates within amino-acid biosynthesis; L-tryptophan biosynthesis; L-tryptophan from chorismate: step 2/5. Functionally, catalyzes the transfer of the phosphoribosyl group of 5-phosphorylribose-1-pyrophosphate (PRPP) to anthranilate to yield N-(5'-phosphoribosyl)-anthranilate (PRA). The chain is Anthranilate phosphoribosyltransferase from Methanococcus maripaludis (strain DSM 14266 / JCM 13030 / NBRC 101832 / S2 / LL).